We begin with the raw amino-acid sequence, 1718 residues long: PR domain zinc finger protein 2 (1718 aa).

The SET domain maps to glutamate 28 to asparagine 141. The segment at glutamate 155–serine 335 is disordered. Positions alanine 159–lysine 173 are enriched in basic residues. The span at glutamine 189–methionine 202 shows a compositional bias: polar residues. Residues aspartate 204–proline 216 are compositionally biased toward basic and acidic residues. Over residues aspartate 265–alanine 297 the composition is skewed to acidic residues. A retinoblastoma protein binding region spans residues glutamate 294 to proline 316. Residues serine 304 to serine 327 are compositionally biased toward basic and acidic residues. Lysine 347 participates in a covalent cross-link: Glycyl lysine isopeptide (Lys-Gly) (interchain with G-Cter in SUMO2). 2 C2H2-type zinc fingers span residues phenylalanine 360 to histidine 382 and phenylalanine 390 to histidine 412. The interval arginine 405–isoleucine 457 is disordered. At serine 421 the chain carries Phosphoserine. A C2H2-type 3 zinc finger spans residues histidine 483–histidine 506. Disordered stretches follow at residues lysine 513–alanine 550 and glutamate 622–valine 660. Serine 643 carries the post-translational modification Phosphoserine. Glycyl lysine isopeptide (Lys-Gly) (interchain with G-Cter in SUMO2) cross-links involve residues lysine 651, lysine 690, and lysine 692. The interval threonine 729–proline 797 is disordered. The segment covering serine 738–proline 748 has biased composition (low complexity). Phosphoserine is present on serine 743. Residue lysine 774 forms a Glycyl lysine isopeptide (Lys-Gly) (interchain with G-Cter in SUMO2) linkage. A phosphoserine mark is found at serine 781, serine 785, and serine 796. Glycyl lysine isopeptide (Lys-Gly) (interchain with G-Cter in SUMO2) cross-links involve residues lysine 866 and lysine 879. A disordered region spans residues valine 903 to serine 1083. Over residues leucine 951–aspartate 969 the composition is skewed to low complexity. 2 short sequence motifs (SH3-binding) span residues proline 970–valine 979 and proline 985–proline 998. Pro residues predominate over residues proline 970–alanine 997. A compositionally biased stretch (low complexity) spans serine 1018–valine 1027. Residues serine 1028–glutamate 1038 are compositionally biased toward pro residues. Residues serine 1028 to serine 1052 carry the SH3-binding motif. A compositionally biased stretch (low complexity) spans serine 1042 to serine 1072. 3 C2H2-type zinc fingers span residues phenylalanine 1134–histidine 1156, phenylalanine 1162–histidine 1185, and phenylalanine 1191–histidine 1214. Glycyl lysine isopeptide (Lys-Gly) (interchain with G-Cter in SUMO2) cross-links involve residues lysine 1147 and lysine 1151. The tract at residues histidine 1244 to serine 1265 is disordered. The span at aspartate 1251–serine 1265 shows a compositional bias: acidic residues. Residues lysine 1257 and lysine 1281 each participate in a glycyl lysine isopeptide (Lys-Gly) (interchain with G-Cter in SUMO2) cross-link. The C2H2-type 7; atypical zinc-finger motif lies at isoleucine 1333–cysteine 1355. The segment at histidine 1455–cysteine 1478 adopts a C2H2-type 8; atypical zinc-finger fold. 3 disordered regions span residues cysteine 1478–serine 1576, glycine 1589–histidine 1612, and lysine 1625–serine 1652. The segment covering proline 1486–glycine 1498 has biased composition (basic residues). A compositionally biased stretch (low complexity) spans histidine 1499–serine 1511. Polar residues-rich tracts occupy residues glutamine 1525–asparagine 1556 and histidine 1599–serine 1608. Positions aspartate 1635–serine 1645 are enriched in basic and acidic residues.

This sequence belongs to the class V-like SAM-binding methyltransferase superfamily. In terms of assembly, binds to the retinoblastoma protein (RB). Interacts with GATA3. Highly expressed in retinoblastoma cell lines and in brain tumors. Also expressed in a number of other cell lines and in brain, heart, skeletal muscle, liver and spleen. Isoform 1 is expressed in testis at much higher level than isoform 3.

The protein localises to the nucleus. It carries out the reaction L-lysyl(9)-[histone H3] + 3 S-adenosyl-L-methionine = N(6),N(6),N(6)-trimethyl-L-lysyl(9)-[histone H3] + 3 S-adenosyl-L-homocysteine + 3 H(+). In terms of biological role, S-adenosyl-L-methionine-dependent histone methyltransferase that specifically methylates 'Lys-9' of histone H3. May function as a DNA-binding transcription factor. Binds to the macrophage-specific TPA-responsive element (MTE) of the HMOX1 (heme oxygenase 1) gene and may act as a transcriptional activator of this gene. The sequence is that of PR domain zinc finger protein 2 (PRDM2) from Homo sapiens (Human).